Here is a 338-residue protein sequence, read N- to C-terminus: POU domain, class 4, transcription factor 3 (338 aa).

The POU-IV box signature appears at 56 to 65; sequence RAEALAAVDI. The 78-residue stretch at 179-256 folds into the POU-specific domain; that stretch reads DVESDPRELE…VLQAWLEEAE (78 aa). The segment at residues 274-333 is a DNA-binding region (homeobox); that stretch reads RKRKRTSIAAPEKRSLEAYFAIQPRPSSEKIAAIAEKLDLKKNVVRVWFCNQRQKQKRMK.

This sequence belongs to the POU transcription factor family. Class-4 subfamily. As to quaternary structure, interacts with ISL1. Brain. Seems to be specific to the retina.

It localises to the nucleus. The protein resides in the cytoplasm. Its function is as follows. Acts as a transcriptional activator. Acts by binding to sequences related to the consensus octamer motif 5'-ATGCAAAT-3' in the regulatory regions of its target genes. Involved in the auditory system development, required for terminal differentiation of hair cells in the inner ear. The protein is POU domain, class 4, transcription factor 3 (POU4F3) of Homo sapiens (Human).